The primary structure comprises 165 residues: MKPVTTDLCDAHEDRLAEGTLRVMAPVFRAFGKQPAFAGPAATLKVFEDNSLVRATLESPGRGRVLVIDGGGSLRCALVGGNLGLLAEKNGWVGIVVNGCIRDTAELDVCDIGIRALAAHPQKSQKRNVGESEVTVQMPGAVVRPGNWIYVDVDGILVADDKLER.

Residues 80-83 and R102 each bind substrate; that span reads GGNL. D103 contacts a divalent metal cation.

This sequence belongs to the class II aldolase/RraA-like family. Homotrimer. It depends on a divalent metal cation as a cofactor.

The enzyme catalyses 4-hydroxy-4-methyl-2-oxoglutarate = 2 pyruvate. It carries out the reaction oxaloacetate + H(+) = pyruvate + CO2. Catalyzes the aldol cleavage of 4-hydroxy-4-methyl-2-oxoglutarate (HMG) into 2 molecules of pyruvate. Also contains a secondary oxaloacetate (OAA) decarboxylase activity due to the common pyruvate enolate transition state formed following C-C bond cleavage in the retro-aldol and decarboxylation reactions. The sequence is that of Putative 4-hydroxy-4-methyl-2-oxoglutarate aldolase from Cupriavidus taiwanensis (strain DSM 17343 / BCRC 17206 / CCUG 44338 / CIP 107171 / LMG 19424 / R1) (Ralstonia taiwanensis (strain LMG 19424)).